The primary structure comprises 349 residues: Nicotinate-nucleotide--dimethylbenzimidazole phosphoribosyltransferase (349 aa).

The Proton acceptor role is filled by Glu318.

Belongs to the CobT family.

It catalyses the reaction 5,6-dimethylbenzimidazole + nicotinate beta-D-ribonucleotide = alpha-ribazole 5'-phosphate + nicotinate + H(+). Its pathway is nucleoside biosynthesis; alpha-ribazole biosynthesis; alpha-ribazole from 5,6-dimethylbenzimidazole: step 1/2. Its function is as follows. Catalyzes the synthesis of alpha-ribazole-5'-phosphate from nicotinate mononucleotide (NAMN) and 5,6-dimethylbenzimidazole (DMB). The sequence is that of Nicotinate-nucleotide--dimethylbenzimidazole phosphoribosyltransferase from Alkaliphilus metalliredigens (strain QYMF).